We begin with the raw amino-acid sequence, 434 residues long: Enolase A (434 aa).

Substrate-binding residues include His-160 and Glu-169. Glu-212 serves as the catalytic Proton donor. Mg(2+)-binding residues include Asp-247, Glu-296, and Asp-321. The substrate site is built by Glu-296 and Asp-321. The active-site Proton acceptor is Lys-346. Substrate is bound by residues 373-376 and Lys-397; that span reads SHRS.

It belongs to the enolase family. Homodimer. Mg(2+) serves as cofactor.

It localises to the cytoplasm. The catalysed reaction is (2R)-2-phosphoglycerate = phosphoenolpyruvate + H2O. It functions in the pathway carbohydrate degradation; glycolysis; pyruvate from D-glyceraldehyde 3-phosphate: step 4/5. The sequence is that of Enolase A (enoA) from Dictyostelium discoideum (Social amoeba).